Here is a 337-residue protein sequence, read N- to C-terminus: Tetraacyldisaccharide 4'-kinase (337 aa).

Thr-55–Thr-62 lines the ATP pocket.

Belongs to the LpxK family.

It carries out the reaction a lipid A disaccharide + ATP = a lipid IVA + ADP + H(+). Its pathway is glycolipid biosynthesis; lipid IV(A) biosynthesis; lipid IV(A) from (3R)-3-hydroxytetradecanoyl-[acyl-carrier-protein] and UDP-N-acetyl-alpha-D-glucosamine: step 6/6. Its function is as follows. Transfers the gamma-phosphate of ATP to the 4'-position of a tetraacyldisaccharide 1-phosphate intermediate (termed DS-1-P) to form tetraacyldisaccharide 1,4'-bis-phosphate (lipid IVA). The protein is Tetraacyldisaccharide 4'-kinase of Blochmanniella pennsylvanica (strain BPEN).